The following is a 229-amino-acid chain: 23 kDa piroplasm membrane protein (229 aa).

Residues 1-19 (MNKYFKVFFFVLLTHALKS) form the signal peptide. At 20-203 (SLIFGQATLQ…EKEETSKKKY (184 aa)) the chain is on the extracellular side. The helical transmembrane segment at 204-224 (VLMVVVVVVFVVVASLVVFLV) threads the bilayer. The Cytoplasmic segment spans residues 225 to 229 (KFCLK).

The protein resides in the membrane. In Theileria annulata, this protein is 23 kDa piroplasm membrane protein.